We begin with the raw amino-acid sequence, 452 residues long: UDP-N-acetylmuramoyl-L-alanine--L-glutamate ligase (452 aa).

Residue 118–124 coordinates ATP; sequence GSKGKST.

The protein belongs to the MurCDEF family. MurD2 subfamily.

It is found in the cytoplasm. It catalyses the reaction UDP-N-acetyl-alpha-D-muramoyl-L-alanine + L-glutamate + ATP = UDP-N-acetyl-alpha-D-muramoyl-L-alanyl-L-glutamate + ADP + phosphate + H(+). It participates in cell wall biogenesis; peptidoglycan biosynthesis. Its function is as follows. Cell wall formation. Catalyzes the addition of L-glutamate to the nucleotide precursor UDP-N-acetylmuramoyl-L-alanine. This is UDP-N-acetylmuramoyl-L-alanine--L-glutamate ligase from Micromonospora sp. (strain ATCC 39149 / NRRL 15099 / SCC 1413).